Consider the following 71-residue polypeptide: Long neurotoxin 1 (71 aa).

Cystine bridges form between C3–C20, C14–C41, C26–C30, C45–C56, and C57–C62.

This sequence belongs to the three-finger toxin family. Long-chain subfamily. Type II alpha-neurotoxin sub-subfamily. Expressed by the venom gland.

The protein localises to the secreted. Binds with high affinity to muscular (alpha-1/CHRNA1) and neuronal (alpha-7/CHRNA7) nicotinic acetylcholine receptor (nAChR) and inhibits acetylcholine from binding to the receptor, thereby impairing neuromuscular and neuronal transmission. This chain is Long neurotoxin 1, found in Naja haje haje (Egyptian cobra).